The sequence spans 282 residues: Large ribosomal subunit protein uL2c (282 aa).

A disordered region spans residues 230–261; it reads SAQNAVDHPHGGGEGKAPIGRIPSTPWGKPAL.

This sequence belongs to the universal ribosomal protein uL2 family. As to quaternary structure, part of the 50S ribosomal subunit.

It is found in the plastid. In Helicosporidium sp. subsp. Simulium jonesii (Green alga), this protein is Large ribosomal subunit protein uL2c (rpl2).